A 149-amino-acid polypeptide reads, in one-letter code: Transcriptional repressor NrdR (149 aa).

The segment at 3 to 34 (CPFCGFEESKVVDSRSTDDNTTIRRRRECLKC) is a zinc-finger region. The region spanning 49-139 (ILVIKKDLTR…VYRQFKDIDT (91 aa)) is the ATP-cone domain.

Belongs to the NrdR family. Zn(2+) is required as a cofactor.

Functionally, negatively regulates transcription of bacterial ribonucleotide reductase nrd genes and operons by binding to NrdR-boxes. This Clostridium beijerinckii (strain ATCC 51743 / NCIMB 8052) (Clostridium acetobutylicum) protein is Transcriptional repressor NrdR.